The following is a 219-amino-acid chain: Probable lipoprotein YiaD (219 aa).

An N-terminal signal peptide occupies residues Met-1–Gly-20. Cys-21 is lipidated: N-palmitoyl cysteine. Cys-21 carries S-diacylglycerol cysteine lipidation. 2 helical membrane-spanning segments follow: residues Ile-37–Ser-55 and Gly-62–Gln-84. The region spanning Gly-103–Leu-219 is the OmpA-like domain.

The protein resides in the cell inner membrane. It localises to the cell outer membrane. Its function is as follows. Suppresses temperature-sensitive mutations in BamB when overexpressed. In Escherichia coli (strain K12), this protein is Probable lipoprotein YiaD (yiaD).